A 67-amino-acid chain; its full sequence is Tachystatin-A2 (67 aa).

The first 23 residues, 1-23 (MKLQNTLILIGCLFLMGAMIGDA), serve as a signal peptide directing secretion. 3 cysteine pairs are disulfide-bonded: Cys-27–Cys-47, Cys-34–Cys-52, and Cys-46–Cys-64.

In terms of tissue distribution, granular hemocytes, small secretory granules.

The protein resides in the secreted. Its function is as follows. Exhibits stronger antimicrobial activity against the Gram-positive bacteria (S.aureus (IC(50)=4.2 ug/ml)) and fungi (C.albicans (IC(50)=3.0 ug/ml) and P.pastoris (IC(50)=0.5 ug/ml)) than Gram-negative bacteria (E.coli (IC(50)=25 ug/ml)). Binds to chitin (8.4 uM are required to obtain 50% of binding). Does not cause hemolysis on sheep erythrocytes. Has no blocking activity on the P-type calcium channel. Has also been shown to weakly inhibit Kv1.2/KCNA2 voltage-gated potassium channels and TRPV1 receptors. This Tachypleus tridentatus (Japanese horseshoe crab) protein is Tachystatin-A2.